We begin with the raw amino-acid sequence, 494 residues long: Serine/threonine-protein kinase cst-1 (494 aa).

The disordered stretch occupies residues 1 to 27; the sequence is MPPSTDSSRRNSEEGFSDGFKLDSSAL. Residues 35–286 form the Protein kinase domain; that stretch reads FDIVGKLGEG…ALRLCEHTFI (252 aa). ATP contacts are provided by residues 41–49 and Lys64; that span reads LGEGSYGSV. Catalysis depends on Asp154, which acts as the Proton acceptor. Positions 364–413 are disordered; it reads IPKSAYGSSRNNGSPRVQPPGHTASACDPSNNPPFAEEGTGPNFQIGTSE. Polar residues predominate over residues 369–378; sequence YGSSRNNGSP. The SARAH domain occupies 443–490; the sequence is FEFLRNITLDELIRRKESLDSEMEEEIRELQRRYKTKRQPILDVIEIK.

Belongs to the protein kinase superfamily. STE Ser/Thr protein kinase family. STE20 subfamily. Mg(2+) serves as cofactor. Proteolytically cleaved by caspase-3 during apoptosis which results in kinase activation.

It catalyses the reaction L-seryl-[protein] + ATP = O-phospho-L-seryl-[protein] + ADP + H(+). The enzyme catalyses L-threonyl-[protein] + ATP = O-phospho-L-threonyl-[protein] + ADP + H(+). Serine/threonine-protein kinase which extends lifespan and delays tissue aging, probably by activating daf-16. The polypeptide is Serine/threonine-protein kinase cst-1 (cst-1) (Caenorhabditis briggsae).